Reading from the N-terminus, the 179-residue chain is Large ribosomal subunit protein uL5 (179 aa).

It belongs to the universal ribosomal protein uL5 family. Part of the 50S ribosomal subunit; part of the 5S rRNA/L5/L18/L25 subcomplex. Contacts the 5S rRNA and the P site tRNA. Forms a bridge to the 30S subunit in the 70S ribosome.

This is one of the proteins that bind and probably mediate the attachment of the 5S RNA into the large ribosomal subunit, where it forms part of the central protuberance. In the 70S ribosome it contacts protein S13 of the 30S subunit (bridge B1b), connecting the 2 subunits; this bridge is implicated in subunit movement. Contacts the P site tRNA; the 5S rRNA and some of its associated proteins might help stabilize positioning of ribosome-bound tRNAs. This is Large ribosomal subunit protein uL5 from Haemophilus ducreyi (strain 35000HP / ATCC 700724).